The primary structure comprises 557 residues: 2-isopropylmalate synthase (557 aa).

In terms of domain architecture, Pyruvate carboxyltransferase spans 31 to 304; sequence PTWCSVDLRD…DPGLNFASML (274 aa). Asp40, His243, His245, and Asn279 together coordinate Mg(2+). The tract at residues 439 to 557 is regulatory domain; it reads IENPIKFLNF…NTMIKDSAAV (119 aa).

It belongs to the alpha-IPM synthase/homocitrate synthase family. LeuA type 2 subfamily. As to quaternary structure, homodimer. It depends on Mg(2+) as a cofactor.

Its subcellular location is the cytoplasm. The enzyme catalyses 3-methyl-2-oxobutanoate + acetyl-CoA + H2O = (2S)-2-isopropylmalate + CoA + H(+). Its pathway is amino-acid biosynthesis; L-leucine biosynthesis; L-leucine from 3-methyl-2-oxobutanoate: step 1/4. Its function is as follows. Catalyzes the condensation of the acetyl group of acetyl-CoA with 3-methyl-2-oxobutanoate (2-ketoisovalerate) to form 3-carboxy-3-hydroxy-4-methylpentanoate (2-isopropylmalate). This is 2-isopropylmalate synthase from Desulfitobacterium hafniense (strain Y51).